A 448-amino-acid polypeptide reads, in one-letter code: UPF0210 protein Pars_1033 (448 aa).

The protein belongs to the UPF0210 family.

This Pyrobaculum arsenaticum (strain DSM 13514 / JCM 11321 / PZ6) protein is UPF0210 protein Pars_1033.